We begin with the raw amino-acid sequence, 264 residues long: Protein-lysine methyltransferase METTL21C (264 aa).

Residues 1–10 are compositionally biased toward polar residues; the sequence is MDVCLSSAQQ. Residues 1 to 46 form a disordered region; the sequence is MDVCLSSAQQPGRRGEGLSSPGGWLEAEKKGAPQKDSTGGVLEESN. S-adenosyl-L-methionine contacts are provided by residues tryptophan 92, 120-122, aspartate 141, tryptophan 172, and serine 193; that span reads GAG.

Belongs to the methyltransferase superfamily. METTL21 family. In terms of assembly, interacts with members of the heat shock protein 70 families; these proteins may possibly be methylation substrates for the enzyme.

The protein localises to the nucleus. It localises to the cytoplasm. The enzyme catalyses L-lysyl-[protein] + S-adenosyl-L-methionine = N(6)-methyl-L-lysyl-[protein] + S-adenosyl-L-homocysteine + H(+). The catalysed reaction is N(6)-methyl-L-lysyl-[protein] + S-adenosyl-L-methionine = N(6),N(6)-dimethyl-L-lysyl-[protein] + S-adenosyl-L-homocysteine + H(+). It carries out the reaction N(6),N(6)-dimethyl-L-lysyl-[protein] + S-adenosyl-L-methionine = N(6),N(6),N(6)-trimethyl-L-lysyl-[protein] + S-adenosyl-L-homocysteine + H(+). Functionally, protein-lysine N-methyltransferase using S-adenosyl-L-methionine as methyl donor. Mono-di and trimethylates 'Lys-943' of AARS1. The polypeptide is Protein-lysine methyltransferase METTL21C (Homo sapiens (Human)).